Reading from the N-terminus, the 239-residue chain is DNA repair protein RecO (239 aa).

It belongs to the RecO family.

Functionally, involved in DNA repair and RecF pathway recombination. This is DNA repair protein RecO from Bifidobacterium longum (strain DJO10A).